The sequence spans 223 residues: Ribose-5-phosphate isomerase A (223 aa).

Residues 32 to 35 (TGST), 85 to 88 (DGAD), and 98 to 101 (KGGG) contribute to the substrate site. Glutamate 107 serves as the catalytic Proton acceptor. Substrate is bound at residue lysine 125.

This sequence belongs to the ribose 5-phosphate isomerase family. Homodimer.

It carries out the reaction aldehydo-D-ribose 5-phosphate = D-ribulose 5-phosphate. Its pathway is carbohydrate degradation; pentose phosphate pathway; D-ribose 5-phosphate from D-ribulose 5-phosphate (non-oxidative stage): step 1/1. In terms of biological role, catalyzes the reversible conversion of ribose-5-phosphate to ribulose 5-phosphate. This is Ribose-5-phosphate isomerase A from Pseudomonas aeruginosa (strain LESB58).